Here is a 118-residue protein sequence, read N- to C-terminus: Late cornified envelope protein 1E (118 aa).

A compositionally biased stretch (low complexity) spans 1–10 (MSCQQSQQQC). Disordered stretches follow at residues 1-23 (MSCQQSQQQCQPPPKCTPKCPPK) and 84-118 (RSHRHRPQSSDCCSQPSGGSSCCGGGSGQHSGGCC). The span at 11-23 (QPPPKCTPKCPPK) shows a compositional bias: pro residues. The segment covering 92 to 103 (SSDCCSQPSGGS) has biased composition (low complexity). The span at 104 to 118 (SCCGGGSGQHSGGCC) shows a compositional bias: gly residues.

It belongs to the LCE family. Interacts with CYSRT1. In terms of tissue distribution, skin-specific. Expression was readily detected in adult trunk skin, adult arm skin, fetal skin, penal skin, vulva, esophagus and tongue. Not expressed in the cervix, rectum, lung, colon, or placenta.

Its function is as follows. Precursors of the cornified envelope of the stratum corneum. This Homo sapiens (Human) protein is Late cornified envelope protein 1E (LCE1E).